The primary structure comprises 485 residues: Glutamyl-tRNA(Gln) amidotransferase subunit A (485 aa).

Catalysis depends on charge relay system residues lysine 79 and serine 154. Serine 178 serves as the catalytic Acyl-ester intermediate.

Belongs to the amidase family. GatA subfamily. As to quaternary structure, heterotrimer of A, B and C subunits.

The catalysed reaction is L-glutamyl-tRNA(Gln) + L-glutamine + ATP + H2O = L-glutaminyl-tRNA(Gln) + L-glutamate + ADP + phosphate + H(+). Allows the formation of correctly charged Gln-tRNA(Gln) through the transamidation of misacylated Glu-tRNA(Gln) in organisms which lack glutaminyl-tRNA synthetase. The reaction takes place in the presence of glutamine and ATP through an activated gamma-phospho-Glu-tRNA(Gln). This Clostridium botulinum (strain ATCC 19397 / Type A) protein is Glutamyl-tRNA(Gln) amidotransferase subunit A.